A 201-amino-acid chain; its full sequence is LexA repressor (201 aa).

Positions 28–48 (LREIAAKLGISGTLGVMKHLE) form a DNA-binding region, H-T-H motif. Residues Ser-120 and Lys-157 each act as for autocatalytic cleavage activity in the active site.

Belongs to the peptidase S24 family. In terms of assembly, homodimer.

It carries out the reaction Hydrolysis of Ala-|-Gly bond in repressor LexA.. Represses a number of genes involved in the response to DNA damage (SOS response), including recA and lexA. In the presence of single-stranded DNA, RecA interacts with LexA causing an autocatalytic cleavage which disrupts the DNA-binding part of LexA, leading to derepression of the SOS regulon and eventually DNA repair. This chain is LexA repressor, found in Geobacter sp. (strain M21).